A 394-amino-acid chain; its full sequence is MALVRWGLRRQNFHLLRRRRVLLLKLTVVVISVLLFCEYFIYYLVLFRCHWPEVKMPARGGRQEPVLKAMFLADTHLLGEIRGHWLDKLRREWQMERAFQTALWLLQPEVVFILGDVFDEGKWSSAQAWADDLHRFQRMFRHGSHVQLKVVIGNHDIGFHYQMSKYRINRFEKVFGSERLFSLKGVNFVMVNSVAMEGDGCTICSEAEAELREISRKLNCSQEQVQGSSQCDHEPRLPLSAPVLLQHYPLYRASDANCSGEDAAPPEERSVPFEEKYDVLSREASQKLLWWLRPRLILSGHTHSACEVLHPGGAPEVSVPSFSWRNRNNPSFIMGSLTSRDYALSKCYLPCEDTVLTTYCAAAAFLLVLILAHFERLPSSFLFGWKLCRSHLRR.

A helical membrane pass occupies residues 27 to 47; sequence TVVVISVLLFCEYFIYYLVLF. Residues Asp-74, Asp-116, Asn-154, His-247, His-301, and His-303 each contribute to the a divalent metal cation site. A helical membrane pass occupies residues 354–374; it reads TVLTTYCAAAAFLLVLILAHF.

Belongs to the metallophosphoesterase superfamily. MPPE1 family. As to quaternary structure, interacts with GPI-anchor proteins (via the GPI portion). Interacts with TMED10. Mn(2+) serves as cofactor.

The protein resides in the endoplasmic reticulum-Golgi intermediate compartment membrane. Functionally, metallophosphoesterase that catalyzes the removal of a side-chain ethanolamine-phosphate (EtNP) from the second mannose of the GPI-anchor protein intermediate. Participates in the glycan remodeling steps of GPI-anchor maturation to allow an efficient transport of GPI-anchor proteins from the endoplasmic reticulum to the Golgi. The polypeptide is Metallophosphoesterase 1 (Rattus norvegicus (Rat)).